The sequence spans 224 residues: UPF0758 protein LCA_0852 (224 aa).

One can recognise an MPN domain in the interval 100–222 (VVASSQMVGQ…YLSLREEGYL (123 aa)). Zn(2+) is bound by residues histidine 171, histidine 173, and aspartate 184. The JAMM motif signature appears at 171–184 (HNHPSGQLAPSTQD).

It belongs to the UPF0758 family.

This is UPF0758 protein LCA_0852 from Latilactobacillus sakei subsp. sakei (strain 23K) (Lactobacillus sakei subsp. sakei).